Here is a 226-residue protein sequence, read N- to C-terminus: Ribonuclease 3 (226 aa).

An RNase III domain is found at 6 to 128 (TKKIQKVLGY…LIGSIYLDSN (123 aa)). Glu41 lines the Mg(2+) pocket. The active site involves Asp45. Mg(2+) is bound by residues Asn114 and Glu117. Glu117 is an active-site residue. In terms of domain architecture, DRBM spans 155–225 (DPKTRLQEYL…AQKALIKLGV (71 aa)).

Belongs to the ribonuclease III family. Homodimer. Requires Mg(2+) as cofactor.

The protein localises to the cytoplasm. It carries out the reaction Endonucleolytic cleavage to 5'-phosphomonoester.. Functionally, digests double-stranded RNA. Involved in the processing of primary rRNA transcript to yield the immediate precursors to the large and small rRNAs (23S and 16S). Processes some mRNAs, and tRNAs when they are encoded in the rRNA operon. Processes pre-crRNA and tracrRNA of type II CRISPR loci if present in the organism. The protein is Ribonuclease 3 of Buchnera aphidicola subsp. Acyrthosiphon pisum (strain 5A).